We begin with the raw amino-acid sequence, 106 residues long: uncharacterized protein (106 aa).

The next 2 membrane-spanning stretches (helical) occupy residues 17–37 (AGLLMTISLAKSFSFAIAVLV) and 55–75 (FSSSYVFLYFIVICRLRFMIF).

The protein localises to the membrane. This is an uncharacterized protein from Saccharomyces cerevisiae (strain ATCC 204508 / S288c) (Baker's yeast).